A 373-amino-acid polypeptide reads, in one-letter code: PqqA peptide cyclase (373 aa).

The 221-residue stretch at isoleucine 7 to aspartate 227 folds into the Radical SAM core domain. Residues cysteine 21, cysteine 25, and cysteine 28 each coordinate [4Fe-4S] cluster.

It belongs to the radical SAM superfamily. PqqE family. In terms of assembly, interacts with PqqD. The interaction is necessary for activity of PqqE. [4Fe-4S] cluster is required as a cofactor.

It catalyses the reaction [PQQ precursor protein] + S-adenosyl-L-methionine = E-Y cross-linked-[PQQ precursor protein] + 5'-deoxyadenosine + L-methionine + H(+). It participates in cofactor biosynthesis; pyrroloquinoline quinone biosynthesis. Functionally, catalyzes the cross-linking of a glutamate residue and a tyrosine residue in the PqqA protein as part of the biosynthesis of pyrroloquinoline quinone (PQQ). This Methylocella silvestris (strain DSM 15510 / CIP 108128 / LMG 27833 / NCIMB 13906 / BL2) protein is PqqA peptide cyclase.